The primary structure comprises 918 residues: MADRKSDEGEDEYQHKEQMVTNRTSSFQPKSTEDSISKLAKMRAADRREEFMEERASFSAVKRGYQAGDDEEDDFTAEEEPPAKKPLTVAERLMAAMGHKAGEGLGKHGQGISEPIASSTQRGRTGLGHNAGKATARDFNEVWDETTEEKTVVERVEWMTDIEEEKRAEICEQLKDDKWMVIGKEKRTIDDETKFCSQQSITEMIEAKNVFDLMSDKDLREARTRANPYETIGSAFFQNRAAMKTANMDKIYDWILSRENTENDRFLLKNPLQESQTAENVDRSEDLFYFADVCAGPGGFSEYMLWRKGFYNAKGFGFTLAGKDDFKLFKFTASSQYFFETFYGTKDNGDVMDPVNIDSLEAHISRGTSGLGVHLMMADGGFSVEGQENIQEILSKRLYLCQLLVSLCIVREGGNFFCKLFDIFTPFSVGLIYLMRVCYQSVSLHKPHTSRPANSERYITCKGLRKEFANVVKEYLKRVNRKLDELKNKKSHDDVTDLMPLDVIEADQIFMDEIIRHNEFLANRQTLYLRKYQSFAKNQGQFDKDQGNLRDECLKYWQVPNKQRPRGGDRGNRHDNMQRLNPLQVYGKYCKKVCGESEIGNTFPDFSLNCLDAPLPNIPYEEYRFVPLASSGSPNLLIAAGDSAFIFRSGRFESISADHIRIPENTILLVDWAEEVVRGDGNRIKISSEPQVVRIIDAAVLFGDDVSNLPYEERMKAAEKFVAALKQTNRKVKKGWGHRAEMIKPHLKICAKTYSLAELDEFRSNLEKLEHNRELAVLFTEGEFTFRCQALRFTRIIKQEWRMGWSKSQQKPYAHSQEHQNAGSIPVELWAEKSIYSSFWDSVICLNKDKKKLMEAMEHTKGKCPIPSSIWSWKACIRTPYGPEKILNYPEPFEGKPTIAALKAQIENTDLIVKRVRN.

Residues 1–18 (MADRKSDEGEDEYQHKEQ) show a composition bias toward basic and acidic residues. Disordered stretches follow at residues 1–56 (MADR…EERA) and 62–81 (KRGY…EEEP). Polar residues predominate over residues 19–30 (MVTNRTSSFQPK). Residues 43–56 (RAADRREEFMEERA) show a composition bias toward basic and acidic residues. A compositionally biased stretch (acidic residues) spans 68–80 (GDDEEDDFTAEEE). One can recognise a G-patch domain in the interval 86–132 (PLTVAERLMAAMGHKAGEGLGKHGQGISEPIASSTQRGRTGLGHNAG). The RrmJ-type SAM-dependent 2'-O-MTase domain occupies 236–465 (FFQNRAAMKT…ERYITCKGLR (230 aa)). 2 residues coordinate S-adenosyl-L-methionine: G298 and D379. The active-site Proton acceptor is K419.

The catalysed reaction is a 5'-end (N(7)-methyl 5'-triphosphoguanosine)-ribonucleoside in mRNA + S-adenosyl-L-methionine = a 5'-end (N(7)-methyl 5'-triphosphoguanosine)-(2'-O-methyl-ribonucleoside) in mRNA + S-adenosyl-L-homocysteine + H(+). S-adenosyl-L-methionine-dependent methyltransferase that mediates mRNA cap1 2'-O-ribose methylation to the 5'-cap structure of mRNAs. Methylates the ribose of the first nucleotide of a m(7)GpppG-capped mRNA to produce m(7)GpppNmp (cap1). Cap1 modification is linked to higher levels of translation. In Caenorhabditis elegans, this protein is Cap-specific mRNA (nucleoside-2'-O-)-methyltransferase 1.